Here is a 289-residue protein sequence, read N- to C-terminus: ATP synthase gamma chain (289 aa).

Belongs to the ATPase gamma chain family. As to quaternary structure, F-type ATPases have 2 components, CF(1) - the catalytic core - and CF(0) - the membrane proton channel. CF(1) has five subunits: alpha(3), beta(3), gamma(1), delta(1), epsilon(1). CF(0) has three main subunits: a, b and c.

It is found in the cell inner membrane. Functionally, produces ATP from ADP in the presence of a proton gradient across the membrane. The gamma chain is believed to be important in regulating ATPase activity and the flow of protons through the CF(0) complex. The protein is ATP synthase gamma chain of Mannheimia succiniciproducens (strain KCTC 0769BP / MBEL55E).